The chain runs to 176 residues: Ribosome maturation factor RimM (176 aa).

The region spanning 93–172 is the PRC barrel domain; sequence EGEFFYFDVL…EILTKDAKSI (80 aa).

It belongs to the RimM family. In terms of assembly, binds ribosomal protein uS19.

It is found in the cytoplasm. Functionally, an accessory protein needed during the final step in the assembly of 30S ribosomal subunit, possibly for assembly of the head region. Essential for efficient processing of 16S rRNA. May be needed both before and after RbfA during the maturation of 16S rRNA. It has affinity for free ribosomal 30S subunits but not for 70S ribosomes. The polypeptide is Ribosome maturation factor RimM (Campylobacter curvus (strain 525.92)).